A 1117-amino-acid chain; its full sequence is Protein cup (1117 aa).

The tract at residues 1–106 (MQMAEAEQEN…PPPPPPLPTS (106 aa)) is disordered. Pro residues-rich tracts occupy residues 54-64 (YPPPPPPPTPV) and 95-104 (CAPPPPPPLP). Serine 263 and serine 270 each carry phosphoserine. Residues 270-326 (SPRKQVASKEAVPEQQSSQVQQKRPPSTGIHKPGSLRAPKAVRPTTAPVVSSKPVKS) are disordered. Residues 283–294 (EQQSSQVQQKRP) are compositionally biased toward polar residues. The YXXXXLphi motif 1 signature appears at 327–333 (YTRSRLM). Residues serine 347 and serine 350 each carry the phosphoserine modification. Positions 363–369 (ELEGRLR) match the YXXXXLphi motif 2 motif. Disordered regions lie at residues 493 to 528 (ISSQ…EDLS), 596 to 618 (KEGN…KMDH), 654 to 673 (TEHQ…SFQF), 679 to 728 (SQQN…SSSS), 984 to 1004 (GAKH…QARP), and 1016 to 1051 (ISGG…FQSF). Threonine 503 bears the Phosphothreonine mark. Phosphoserine occurs at positions 509, 513, 520, 523, and 524. Low complexity-rich tracts occupy residues 679-712 (SQQN…NTNN) and 988-1001 (QAQQ…QQRQ).

The protein belongs to the 4E-T/EIF4E-T family. Component of the osk RNP complex, which is composed of at least exu, yps, aret/bruno, cup, and the mRNA of osk. Interacts with the decapping activators me31B and tral. Component of the nanos RNP complex, which is composed of at least smg, cup, tral, me31B, the CCR4-NOT complex members Rga/NOT2 and Caf1, and the mRNA of nanos (nos). Interacts with btz. Recruited to the 3'-UTR of nos and osk mRNAs by smg and btz, respectively. Forms a ribonucleoprotein complex (RNP) containing at least me31B, eIF4E1, cup, tral and pAbp; this interaction is required for the translational silencing of maternal mRNAs during the maternal-to-zygotic transition. No interaction was detected with pAbp in 1-5 hour embryos. Interacts with osk and vas. Interacts with Pop2, twin/CCR4, Rga, Not3 and Not1 which are all core components of the CCR4-NOT deadenylase complex; interaction with the complex is required for cup deadenylation activity. Interacts with nanos. Interacts with smg. Interacts (via YXXXXLphi motifs) with eIF4E1; the interaction promotes retention of cup in the cytoplasm. Interacts with orb; the interaction represses the orb positive autoregulatory loop. Interacts with Nup154. In terms of tissue distribution, predominantly expressed in ovaries and in 0-2 hours old embryos. Weakly expressed in testis. Expressed in young embryos through stage 9, then it decreases throughout the rest of embryogenesis. In ovaries, it is expressed in germ cells throughout pre-vitellogenic development, but is not expressed in the somatic follicle cells. In germarial cysts, the protein (and not the transcripts) is transported selectively into the oocyte.

The protein localises to the cytoplasm. It localises to the nucleus. It is found in the cytoplasmic ribonucleoprotein granule. In terms of biological role, adapter protein that plays a central role in localization of transcripts in the oocyte and in young embryos. Maintains RNA targets in a repressed state by promoting their deadenylation and protects deadenylated mRNAs from further degradation. Binds to and recruits eIF-4E to the 3'-UTR of some mRNA targets which prevents interaction between eIF4E1 and eIF4G. This may contribute to translational repression but does not appear to be necessary for it to occur. Can promote translational repression independently of deadenylation and eIF4E1 binding. Required for correct localization of eIF4E1 in the developing oocyte. Required for translational repression of oskar (osk) mRNA. Also required for the translational repression of nanos (nos) mRNA. Promotes the accumulation of the germ plasm components osk, vas and stau at the posterior pole of the oocyte and is required for germ cell development. Represses orb positive autoregulatory activity which prevents premature activation of orb and ensures its accumulation specifically in the developing oocyte. In 0-1 hour embryos, forms a complex with me31B, cup, tral and pAbp which binds to various mRNAs including maternal mRNAs, and down-regulates their expression during the maternal-to-zygotic transition. This Drosophila melanogaster (Fruit fly) protein is Protein cup (cup).